We begin with the raw amino-acid sequence, 181 residues long: Large ribosomal subunit protein uL5 (181 aa).

It belongs to the universal ribosomal protein uL5 family. In terms of assembly, part of the 50S ribosomal subunit; part of the 5S rRNA/L5/L18/L25 subcomplex. Contacts the 5S rRNA and the P site tRNA. Forms a bridge to the 30S subunit in the 70S ribosome.

This is one of the proteins that bind and probably mediate the attachment of the 5S RNA into the large ribosomal subunit, where it forms part of the central protuberance. In the 70S ribosome it contacts protein S13 of the 30S subunit (bridge B1b), connecting the 2 subunits; this bridge is implicated in subunit movement. Contacts the P site tRNA; the 5S rRNA and some of its associated proteins might help stabilize positioning of ribosome-bound tRNAs. The sequence is that of Large ribosomal subunit protein uL5 from Helicobacter pylori (strain J99 / ATCC 700824) (Campylobacter pylori J99).